The primary structure comprises 431 residues: Adenylosuccinate synthetase (431 aa).

GTP contacts are provided by residues glycine 12–lysine 18 and glycine 40–threonine 42. Aspartate 13 functions as the Proton acceptor in the catalytic mechanism. Residues aspartate 13 and glycine 40 each coordinate Mg(2+). IMP is bound by residues aspartate 13–lysine 16, asparagine 38–histidine 41, threonine 129, arginine 143, glutamine 224, threonine 239, and arginine 303. Histidine 41 serves as the catalytic Proton donor. Substrate is bound at residue valine 299–arginine 305. GTP is bound by residues arginine 305, lysine 331 to aspartate 333, and glycine 413 to glycine 415.

It belongs to the adenylosuccinate synthetase family. As to quaternary structure, homodimer. Mg(2+) is required as a cofactor.

The protein resides in the cytoplasm. The enzyme catalyses IMP + L-aspartate + GTP = N(6)-(1,2-dicarboxyethyl)-AMP + GDP + phosphate + 2 H(+). The protein operates within purine metabolism; AMP biosynthesis via de novo pathway; AMP from IMP: step 1/2. Plays an important role in the de novo pathway of purine nucleotide biosynthesis. Catalyzes the first committed step in the biosynthesis of AMP from IMP. In Mycobacteroides abscessus (strain ATCC 19977 / DSM 44196 / CCUG 20993 / CIP 104536 / JCM 13569 / NCTC 13031 / TMC 1543 / L948) (Mycobacterium abscessus), this protein is Adenylosuccinate synthetase.